We begin with the raw amino-acid sequence, 426 residues long: Phosphomethylpyrimidine synthase (426 aa).

Substrate is bound by residues Asn65, Met94, Tyr123, His162, 184–186 (SRG), 225–228 (DGLR), and Glu264. His268 contacts Zn(2+). Position 291 (Tyr291) interacts with substrate. Residue His332 coordinates Zn(2+). [4Fe-4S] cluster-binding residues include Cys409, Cys412, and Cys416.

The protein belongs to the ThiC family. Requires [4Fe-4S] cluster as cofactor.

It carries out the reaction 5-amino-1-(5-phospho-beta-D-ribosyl)imidazole + S-adenosyl-L-methionine = 4-amino-2-methyl-5-(phosphooxymethyl)pyrimidine + CO + 5'-deoxyadenosine + formate + L-methionine + 3 H(+). The protein operates within cofactor biosynthesis; thiamine diphosphate biosynthesis. Functionally, catalyzes the synthesis of the hydroxymethylpyrimidine phosphate (HMP-P) moiety of thiamine from aminoimidazole ribotide (AIR) in a radical S-adenosyl-L-methionine (SAM)-dependent reaction. This Thermodesulfovibrio yellowstonii (strain ATCC 51303 / DSM 11347 / YP87) protein is Phosphomethylpyrimidine synthase.